Here is a 54-residue protein sequence, read N- to C-terminus: Ribulose bisphosphate carboxylase large chain (54 aa).

Positions 1–2 are excised as a propeptide; sequence MS. Position 3 is an N-acetylproline (Pro-3). An N6,N6,N6-trimethyllysine modification is found at Lys-14.

Belongs to the RuBisCO large chain family. Type I subfamily. As to quaternary structure, heterohexadecamer of 8 large chains and 8 small chains.

The protein resides in the plastid. It is found in the chloroplast. The enzyme catalyses 2 (2R)-3-phosphoglycerate + 2 H(+) = D-ribulose 1,5-bisphosphate + CO2 + H2O. It carries out the reaction D-ribulose 1,5-bisphosphate + O2 = 2-phosphoglycolate + (2R)-3-phosphoglycerate + 2 H(+). Functionally, ruBisCO catalyzes two reactions: the carboxylation of D-ribulose 1,5-bisphosphate, the primary event in carbon dioxide fixation, as well as the oxidative fragmentation of the pentose substrate in the photorespiration process. Both reactions occur simultaneously and in competition at the same active site. The chain is Ribulose bisphosphate carboxylase large chain (rbcL) from Rhamnus cathartica (Common buckthorn).